The chain runs to 459 residues: Cysteine--tRNA ligase (459 aa).

Cys-29 lines the Zn(2+) pocket. A 'HIGH' region motif is present at residues 31 to 41 (PTVYDRAHIGN). Residues Cys-209, His-234, and Glu-238 each coordinate Zn(2+). A 'KMSKS' region motif is present at residues 266–270 (KMSKS). Lys-269 is an ATP binding site.

This sequence belongs to the class-I aminoacyl-tRNA synthetase family. In terms of assembly, monomer. Zn(2+) serves as cofactor.

It localises to the cytoplasm. The catalysed reaction is tRNA(Cys) + L-cysteine + ATP = L-cysteinyl-tRNA(Cys) + AMP + diphosphate. This chain is Cysteine--tRNA ligase, found in Paramagnetospirillum magneticum (strain ATCC 700264 / AMB-1) (Magnetospirillum magneticum).